The following is a 217-amino-acid chain: N-(5'-phosphoribosyl)anthranilate isomerase (217 aa).

This sequence belongs to the TrpF family.

It catalyses the reaction N-(5-phospho-beta-D-ribosyl)anthranilate = 1-(2-carboxyphenylamino)-1-deoxy-D-ribulose 5-phosphate. It participates in amino-acid biosynthesis; L-tryptophan biosynthesis; L-tryptophan from chorismate: step 3/5. This is N-(5'-phosphoribosyl)anthranilate isomerase from Bacillus velezensis (strain DSM 23117 / BGSC 10A6 / LMG 26770 / FZB42) (Bacillus amyloliquefaciens subsp. plantarum).